Here is a 321-residue protein sequence, read N- to C-terminus: Phospho-N-acetylmuramoyl-pentapeptide-transferase (321 aa).

The next 10 membrane-spanning stretches (helical) occupy residues 6–26, 50–70, 82–102, 118–138, 143–163, 175–195, 200–220, 226–246, 251–271, and 301–321; these read ALIP…LFIG, GTPT…GIWV, LFIL…DDFI, LLGQ…EGYP, FFGI…FWLV, IDGL…IIAW, YDVL…FAYN, IFMG…ISIM, WTLL…MLQV, and IDII…WFIW.

It belongs to the glycosyltransferase 4 family. MraY subfamily. Requires Mg(2+) as cofactor.

The protein localises to the cell membrane. It carries out the reaction UDP-N-acetyl-alpha-D-muramoyl-L-alanyl-gamma-D-glutamyl-L-lysyl-D-alanyl-D-alanine + di-trans,octa-cis-undecaprenyl phosphate = Mur2Ac(oyl-L-Ala-gamma-D-Glu-L-Lys-D-Ala-D-Ala)-di-trans,octa-cis-undecaprenyl diphosphate + UMP. The protein operates within cell wall biogenesis; peptidoglycan biosynthesis. Catalyzes the initial step of the lipid cycle reactions in the biosynthesis of the cell wall peptidoglycan: transfers peptidoglycan precursor phospho-MurNAc-pentapeptide from UDP-MurNAc-pentapeptide onto the lipid carrier undecaprenyl phosphate, yielding undecaprenyl-pyrophosphoryl-MurNAc-pentapeptide, known as lipid I. The sequence is that of Phospho-N-acetylmuramoyl-pentapeptide-transferase from Enterococcus hirae.